The chain runs to 668 residues: DNA ligase (668 aa).

NAD(+) is bound by residues 34–38 (DTEYD), 83–84 (SL), and E114. K116 (N6-AMP-lysine intermediate) is an active-site residue. NAD(+) contacts are provided by R137, E171, K286, and K310. Residues C404, C407, C422, and C427 each contribute to the Zn(2+) site. A BRCT domain is found at 588–668 (NSDSIIANKT…FFDLLKSEKG (81 aa)).

The protein belongs to the NAD-dependent DNA ligase family. LigA subfamily. Requires Mg(2+) as cofactor. Mn(2+) is required as a cofactor.

The enzyme catalyses NAD(+) + (deoxyribonucleotide)n-3'-hydroxyl + 5'-phospho-(deoxyribonucleotide)m = (deoxyribonucleotide)n+m + AMP + beta-nicotinamide D-nucleotide.. DNA ligase that catalyzes the formation of phosphodiester linkages between 5'-phosphoryl and 3'-hydroxyl groups in double-stranded DNA using NAD as a coenzyme and as the energy source for the reaction. It is essential for DNA replication and repair of damaged DNA. The polypeptide is DNA ligase (Mycoplasma capricolum subsp. capricolum (strain California kid / ATCC 27343 / NCTC 10154)).